Here is a 250-residue protein sequence, read N- to C-terminus: Acetylglutamate kinase (250 aa).

Residues 41 to 42, Arg63, and Asn156 each bind substrate; that span reads GG.

The protein belongs to the acetylglutamate kinase family. ArgB subfamily.

It is found in the cytoplasm. It catalyses the reaction N-acetyl-L-glutamate + ATP = N-acetyl-L-glutamyl 5-phosphate + ADP. It participates in amino-acid biosynthesis; L-arginine biosynthesis; N(2)-acetyl-L-ornithine from L-glutamate: step 2/4. Catalyzes the ATP-dependent phosphorylation of N-acetyl-L-glutamate. The chain is Acetylglutamate kinase from Listeria welshimeri serovar 6b (strain ATCC 35897 / DSM 20650 / CCUG 15529 / CIP 8149 / NCTC 11857 / SLCC 5334 / V8).